A 315-amino-acid polypeptide reads, in one-letter code: Solute carrier family 25 member 32 (315 aa).

Solcar repeat units lie at residues 20–109 (HVRY…IKSY), 118–209 (LEAT…LKLK), and 222–306 (LSTV…VSHF). Transmembrane regions (helical) follow at residues 26-43 (LVAG…LHPL), 89-106 (VWGA…YNAI), 123-143 (YLVS…PLWV), 186-203 (FVPG…FMAY), 227-243 (YISV…AATY), and 281-300 (GIAP…FVVY).

The protein belongs to the mitochondrial carrier (TC 2.A.29) family.

Its subcellular location is the mitochondrion inner membrane. It catalyses the reaction FAD(in) = FAD(out). Its function is as follows. Facilitates flavin adenine dinucleotide (FAD) translocation across the mitochondrial inner membrane into the mitochondrial matrix where it acts as a redox cofactor to assist flavoenzyme activities in fundamental metabolic processes including fatty acid beta-oxidation, amino acid and choline metabolism as well as mitochondrial electron transportation. In particular, provides FAD to DLD dehydrogenase of the glycine cleavage system, part of mitochondrial one-carbon metabolic pathway involved in neural tube closure in early embryogenesis. This Macaca fascicularis (Crab-eating macaque) protein is Solute carrier family 25 member 32.